The chain runs to 873 residues: MTTAHIDAEYQANAIESQIQNDWENRKAFKVADTVEGKHRYILSMFPYPSGKLHMGHVRNYTIGDVISRFYRLKGETVLQPMGWDAFGLPAENAAIAHQVAPAKWTFENIAYMRDQLKKLGLSIDWDREFATCTPEYYHWEQWLFVQLYKKGLIYRKLSTVNWDPVDQTVLANEQVENGRGWRSGALVEKRDIPMYYFRITDYAQELLDDLDTLKDGWPQQVLTMQRNWIGRSTGMDITFPSANPEIYADGLTVYTTRADTLMGVTYVAVAAEHPMALKAAENNPELAAFIEECRMGSVAEADLATAEKKGMATGLFVKHPVTGEEVPVWIANYVLMSYGSGAVMAVPAHDERDFEFANKFNLPIKQVIDAKAADDAEYSVTAWQEWYGSKEGTLVNSGEFDGLEFQAAFDAFLAKLEPQGLANSKVQFRLRDWGVSRQRYWGCPIPMINCDSCGQVPVPEEQLPVVLPTDVVPDGSGNPLNKMPEFYETTCPSCGGHARRETDTLDTFVESSWYYARYASPDFTGGMVKPEAAQSWLPVNQYIGGVEHAILHLLYARFFHKLMRDEGVVQGNEPFTNLLTQGMVLADTFYRESESGKKTWFNPADIILERDEKGRIVSAKYSGDGQDVVIGGQEKMSKSKNNGIDPQAIIDQYGADTARVFMMFAAPPDQSLEWSDAGVEGANRFLKRVWRLATGFLEKGYAQAPIAAELSKDAQDLRRKTHETIQKVGDDIERRHAFNTAIAALMELLNATSKFEVQTADDAAVAREAIETLLTLLAPFAPHLSQTLLAEFGIDLIAAQFPSVDESALTRNTQTIVVQVNGKLRGKLEVSVEISKDELLAQAKALPEIQQFLTGPTKKEIVVPNKLVNLVV.

Positions 47-57 (PYPSGKLHMGH) match the 'HIGH' region motif. Positions 636-640 (KMSKS) match the 'KMSKS' region motif. Lys639 contributes to the ATP binding site.

The protein belongs to the class-I aminoacyl-tRNA synthetase family.

Its subcellular location is the cytoplasm. It carries out the reaction tRNA(Leu) + L-leucine + ATP = L-leucyl-tRNA(Leu) + AMP + diphosphate. The polypeptide is Leucine--tRNA ligase (Acinetobacter baylyi (strain ATCC 33305 / BD413 / ADP1)).